The chain runs to 117 residues: MNPIRRRKIEAEAVRTVAMMILSGKVKDPRVHMVSVHRAEISEDGKNMKVFVTAICTDKKKIKVLSGLNSASGLFQATLSGKLGLRITPKMHFLWDEEYIQSLDESLRLTRKPTNTD.

This sequence belongs to the RbfA family. As to quaternary structure, monomer. Binds 30S ribosomal subunits, but not 50S ribosomal subunits or 70S ribosomes.

It is found in the cytoplasm. Its function is as follows. One of several proteins that assist in the late maturation steps of the functional core of the 30S ribosomal subunit. Associates with free 30S ribosomal subunits (but not with 30S subunits that are part of 70S ribosomes or polysomes). Required for efficient processing of 16S rRNA. May interact with the 5'-terminal helix region of 16S rRNA. The polypeptide is Ribosome-binding factor A (Leptospira interrogans serogroup Icterohaemorrhagiae serovar copenhageni (strain Fiocruz L1-130)).